The chain runs to 323 residues: Transcription factor MYB108 (323 aa).

2 consecutive HTH myb-type domains span residues 16 to 68 (EMDL…LNYL) and 69 to 123 (RPDV…QKHA). DNA-binding regions (H-T-H motif) lie at residues 44 to 68 (WNSL…LNYL) and 96 to 119 (WSKI…RTRV).

In terms of assembly, interacts with BOI, but not with BRG1. In terms of processing, ubiquitinated in vitro by BOI. As to expression, expressed specifically in flowers. Restricted to anthers in maturing flowers. Strongest expression in the vascular and connective tissue where the anther attaches to the filament. Not detected in pollen.

It localises to the nucleus. Transcription factor contributing to the regulation of stamen maturation and male fertility in response to jasmonate signaling. Required for correct timing of anther dehiscence. Acts as a negative regulator of abscisic acid-induced cell death. Not involved in the regulation of BOI. Regulated by MYB21 and at a lower level by MYB24. Negatively regulated by the proteasome in an SCF(COI1) E3 ubiquitin-protein ligase complex-dependent manner. The polypeptide is Transcription factor MYB108 (MYB108) (Arabidopsis thaliana (Mouse-ear cress)).